Here is a 309-residue protein sequence, read N- to C-terminus: Coenzyme PQQ synthesis protein B (309 aa).

It belongs to the PqqB family.

It participates in cofactor biosynthesis; pyrroloquinoline quinone biosynthesis. In terms of biological role, may be involved in the transport of PQQ or its precursor to the periplasm. In Bradyrhizobium diazoefficiens (strain JCM 10833 / BCRC 13528 / IAM 13628 / NBRC 14792 / USDA 110), this protein is Coenzyme PQQ synthesis protein B.